Reading from the N-terminus, the 168-residue chain is Protein B-Myc (168 aa).

2 disordered regions span residues 26–94 and 146–168; these read DDEE…DLPE and EGASVSPAADVEPATPPDCTCNT. Phosphoserine is present on residues Ser-59 and Ser-67.

It is found in the nucleus. In terms of biological role, seems to act as an inhibitor of cellular proliferation. The protein is Protein B-Myc (Mycb) of Rattus norvegicus (Rat).